The chain runs to 60 residues: LKCNKLIPIASKTCPAGKNLCYKMFMMSDLTIPVKRGCIDVCPKNSLLVKYVCCNTDRCN.

4 disulfides stabilise this stretch: Cys-3/Cys-21, Cys-14/Cys-38, Cys-42/Cys-53, and Cys-54/Cys-59.

The protein belongs to the three-finger toxin family. Short-chain subfamily. Type IA cytotoxin sub-subfamily. As to quaternary structure, monomer, or heterodimer with alpha-cobratoxin (AC P01391); disulfide-linked. Expressed by the venom gland.

It localises to the secreted. The protein localises to the target cell membrane. In terms of biological role, monomer: shows cytolytic activity (apoptosis is induced in C2C12 cells, but no cytotoxicity is observed on INS-1E). In addition, this toxin shows insulinotropic activity that may be mediated by the modulation of potassium channels (Kv). It induces the increase of intracellular calcium release. It induces insulin secretion from rat INS-1E cells in absence and in presence of glucose, without affecting cell viability and integrity. In presence of glucose, the insulinotropic activity is increased, suggesting a possible synergistic effect with glucose. Its insulinotropic activity does not involve GLP-1R signaling. Functionally, heterodimer: has no cytolytic activity, but retains most of the alpha-cobratoxin capacity to compete with alpha-bungarotoxin for binding to Torpedo and alpha-7/CHRNA7 nicotinic acetylcholine receptors (nAChRs) as well as to Lymnea stagnalis acetylcholine-binding protein. In Naja kaouthia (Monocled cobra), this protein is Cytotoxin 1.